The primary structure comprises 273 residues: Neuferricin (273 aa).

The first 22 residues, 1–22, serve as a signal peptide directing secretion; the sequence is MLGYLAAAALCLAAVLLMRLDH. The Cytochrome b5 heme-binding domain maps to 44 to 143; that stretch reads GRLMSKEELS…QNYITIGKLT (100 aa).

This sequence belongs to the cytochrome b5 family. MAPR subfamily.

It is found in the secreted. In terms of biological role, heme-binding protein which promotes neuronal but not astrocyte differentiation. In Xenopus tropicalis (Western clawed frog), this protein is Neuferricin (cyb5d2).